A 162-amino-acid chain; its full sequence is Large ribosomal subunit protein eL24 (162 aa).

Disordered stretches follow at residues 64–83 (DIHA…PYSR) and 117–162 (ERIK…GGKR). Residues 71–81 (KKRRRTTKKPY) show a composition bias toward basic residues. The span at 117 to 135 (ERIKKTKDEKKAKKAEVTK) shows a compositional bias: basic and acidic residues.

Belongs to the eukaryotic ribosomal protein eL24 family.

It is found in the cytoplasm. The protein is Large ribosomal subunit protein eL24 (RPL24) of Hordeum vulgare (Barley).